The following is a 119-amino-acid chain: Protein phosphatase EYA4 (119 aa).

The protein belongs to the HAD-like hydrolase superfamily. EYA family. The cofactor is Mg(2+).

Its subcellular location is the cytoplasm. The protein resides in the nucleus. It catalyses the reaction O-phospho-L-tyrosyl-[protein] + H2O = L-tyrosyl-[protein] + phosphate. Functionally, tyrosine phosphatase that specifically dephosphorylates 'Tyr-142' of histone H2AX (H2AXY142ph). 'Tyr-142' phosphorylation of histone H2AX plays a central role in DNA repair and acts as a mark that distinguishes between apoptotic and repair responses to genotoxic stress. Promotes efficient DNA repair by dephosphorylating H2AX, promoting the recruitment of DNA repair complexes containing MDC1. Its function as histone phosphatase probably explains its role in transcription regulation during organogenesis. May be involved in development of the eye. The chain is Protein phosphatase EYA4 (EYA4) from Gallus gallus (Chicken).